A 223-amino-acid polypeptide reads, in one-letter code: MTTNYAHYIDHTLLAMDATEAQIIKLCEEAKQHHFYAVCVNSGYVPVVAQQLAGSSVKVCSVIGFPLGAGLTAAKAFEAQAAINAGAQEIDMVINVGWLKSGKIADVKADIKAVRDNCAATPLKVILETCLLSDEQIVQVCEMCRELDVAFVKTSTGFSTGGAKEEHVKLMRATVGPVMGVKASGAVRDRATAETMIQAGATRIGTSSGVAIVSGQQAAASGY.

The active-site Proton donor/acceptor is the D91. Catalysis depends on K153, which acts as the Schiff-base intermediate with acetaldehyde. K182 functions as the Proton donor/acceptor in the catalytic mechanism.

Belongs to the DeoC/FbaB aldolase family. DeoC type 1 subfamily.

It localises to the cytoplasm. It carries out the reaction 2-deoxy-D-ribose 5-phosphate = D-glyceraldehyde 3-phosphate + acetaldehyde. The protein operates within carbohydrate degradation; 2-deoxy-D-ribose 1-phosphate degradation; D-glyceraldehyde 3-phosphate and acetaldehyde from 2-deoxy-alpha-D-ribose 1-phosphate: step 2/2. Its function is as follows. Catalyzes a reversible aldol reaction between acetaldehyde and D-glyceraldehyde 3-phosphate to generate 2-deoxy-D-ribose 5-phosphate. The protein is Deoxyribose-phosphate aldolase of Yersinia pestis bv. Antiqua (strain Angola).